A 600-amino-acid chain; its full sequence is Adenine deaminase (600 aa).

This sequence belongs to the metallo-dependent hydrolases superfamily. Adenine deaminase family. It depends on Mn(2+) as a cofactor.

It catalyses the reaction adenine + H2O + H(+) = hypoxanthine + NH4(+). The protein is Adenine deaminase of Roseobacter denitrificans (strain ATCC 33942 / OCh 114) (Erythrobacter sp. (strain OCh 114)).